Reading from the N-terminus, the 886-residue chain is Conserved oligomeric Golgi complex subunit 1 (886 aa).

Residues 834 to 846 (SAERKSPIQEPVE) show a composition bias toward basic and acidic residues. Positions 834–886 (SAERKSPIQEPVEKTATTTPTRKSGGNGARKGDSSKSKSSAASFFGMSQEWFR) are disordered. Position 839 is a phosphoserine (serine 839). Residues 848–857 (TATTTPTRKS) are compositionally biased toward polar residues.

The protein belongs to the COG1 family. Component of the conserved oligomeric Golgi complex which is composed of eight different subunits and is required for normal Golgi morphology and localization.

The protein localises to the golgi apparatus membrane. In terms of biological role, required for normal Golgi function. This Drosophila melanogaster (Fruit fly) protein is Conserved oligomeric Golgi complex subunit 1.